Here is a 110-residue protein sequence, read N- to C-terminus: MRHYKTLRYYETVFAVKPTLSEEEMKKKFEQVKEFIKQKGGEILYEEDWGMRQLAYPIQKFNNARYFLVQFKTENPQLPNELDFQLKIDEDVIRWLNFQIKESEVKKNAQ.

This sequence belongs to the bacterial ribosomal protein bS6 family.

Binds together with bS18 to 16S ribosomal RNA. The polypeptide is Small ribosomal subunit protein bS6 (rpsF) (Aquifex aeolicus (strain VF5)).